A 475-amino-acid polypeptide reads, in one-letter code: UDP-glycosyltransferase 101 (475 aa).

The active-site Proton acceptor is histidine 15. Histidine 15 is an an anthocyanidin binding site. Aspartate 117 serves as the catalytic Charge relay. 7 residues coordinate UDP-alpha-D-glucose: alanine 345, glutamine 347, histidine 362, tryptophan 365, asparagine 366, serine 367, and glutamate 370. Position 385 (glycine 385) interacts with an anthocyanidin. Glutamate 386 and glutamine 387 together coordinate UDP-alpha-D-glucose.

The protein belongs to the UDP-glycosyltransferase family.

The enzyme catalyses (20S)-protopanaxadiol + UDP-alpha-D-glucose = (20S)-ginsenoside C-K + UDP + H(+). The catalysed reaction is (20S)-ginsenoside Rg3 + UDP-alpha-D-glucose = (20S)-ginsenoside Rd + UDP + H(+). It catalyses the reaction (20S)-protopanaxatriol + UDP-alpha-D-glucose = (20S)-ginsenoside F1 + UDP + H(+). It carries out the reaction (20S)-ginsenoside F1 + UDP-alpha-D-glucose = (20S)-ginsenoside Rg1 + UDP + H(+). It functions in the pathway secondary metabolite biosynthesis; terpenoid biosynthesis. Component of the dammarane-type triterpene saponins (e.g. ginsenosides or panaxosides) biosynthetic pathway. Glycosyltransferase that catalyzes the biosynthesis of ginsenoside F1 from protopanaxatriol (PPT) and the conversion of ginsenoside F1 to ginsenoside Rg1. Triggers C20-OH glycosylation of ginsenoside Rg3 to produce ginsenoside Rd. Mediates the conversion of protopanaxadiol (PPD) to the ginsenoside compound K. This chain is UDP-glycosyltransferase 101, found in Panax ginseng (Korean ginseng).